Reading from the N-terminus, the 79-residue chain is Virulence protein MsgA (79 aa).

It belongs to the DinI family.

Its function is as follows. Affects survival in macrophages. This is Virulence protein MsgA (msgA) from Salmonella typhi.